Consider the following 181-residue polypeptide: Ribonuclease M5 (181 aa).

A Toprim domain is found at 5 to 88 (KEIIVVEGKD…IKHAYLNTKD (84 aa)). Mg(2+) is bound by residues Glu-11, Asp-57, and Asp-59.

Belongs to the ribonuclease M5 family. It depends on Mg(2+) as a cofactor.

The protein resides in the cytoplasm. The catalysed reaction is Endonucleolytic cleavage of RNA, removing 21 and 42 nucleotides, respectively, from the 5'- and 3'-termini of a 5S-rRNA precursor.. Functionally, required for correct processing of both the 5' and 3' ends of 5S rRNA precursor. Cleaves both sides of a double-stranded region yielding mature 5S rRNA in one step. This is Ribonuclease M5 from Borreliella burgdorferi (strain ATCC 35210 / DSM 4680 / CIP 102532 / B31) (Borrelia burgdorferi).